The sequence spans 488 residues: Kelch-like protein 15 (488 aa).

The 68-residue stretch at 31–98 folds into the BTB domain; that stretch reads LDVTLVIEDH…MYYGTIELSM (68 aa). One can recognise a BACK domain in the interval 133–237; the sequence is CAEIMRLLDD…TPSSVFEKVK (105 aa). Kelch repeat units lie at residues 328–379, 381–426, and 428–473; these read FVFL…VIGR, VYAV…VLGN, and LYIT…NKCK.

In terms of assembly, homodimer. Interacts with CUL3.

The protein localises to the nucleus. It functions in the pathway protein modification; protein ubiquitination. In terms of biological role, substrate-specific adapter for CUL3 E3 ubiquitin-protein ligase complex. In Gallus gallus (Chicken), this protein is Kelch-like protein 15 (KLHL15).